The sequence spans 266 residues: MRSLAVVVAVVATVAMAIGTARGSVSSIVSRAQFDRMLLHRNDGACQAKGFYTYDAFVAAAAAFPGFGTTGSADAQKREVAAFLAQTSHETTGGWATAPDGAFAWGYCFKQERGASSDYCTPSAQWPCAPGKRYYGRGPIQLSHNYNYGPAGRAIGVDLLANPDLVATDATVGFKTAIWFWMTAQPPKPSSHAVIAGQWSPSGADRAAGRVPGFGVITNIINGGIECGHGQDSRVADRIGFYKRYCDILGVGYGNNLDCYSQRPFA.

A signal peptide spans 1-23 (MRSLAVVVAVVATVAMAIGTARG). Cystine bridges form between cysteine 46–cysteine 108, cysteine 120–cysteine 128, and cysteine 227–cysteine 259. The active-site Proton donor is glutamate 90.

It belongs to the glycosyl hydrolase 19 family. Chitinase class II subfamily.

The catalysed reaction is Random endo-hydrolysis of N-acetyl-beta-D-glucosaminide (1-&gt;4)-beta-linkages in chitin and chitodextrins.. Its function is as follows. Defense against chitin-containing fungal pathogens. The chain is 26 kDa endochitinase 2 from Hordeum vulgare (Barley).